A 399-amino-acid polypeptide reads, in one-letter code: MDLVSTSTSPFSCRICNQKAHGNHFGVLTCRACASFFRRAAFSKWSQLKCQKGGCSRNFCKRCRLKKCREMGMDTTKFQYNRDSFRATGQFQLPPPRSLASFVGRPELFLFCDTEAPNAKMLIDVRYLLEEAGRIINQGYETPASGKNQLENLTEGFKYIKVDMNNISSSKYASKDAIISMWEYYFFTVTRWLMYFEGFQKLNSHTQITLIQSVWNVWSRLHKYVATVDYHKANPDTLPTNVVIHNTLVDIENVEFDSTWLSDYPVEHVRRYLSVQHCREFDILGTLRKLNPSELEITYLFAQICFEHAGKRNQGDIMKVTEQFLDSLANDLHDYYVNEMNNSRYFLRLTQLLKINQAIQFSDISPQKQIRNNIIKKEAEKLEKLQKSQFSIKRLSISN.

The nuclear receptor DNA-binding region spans 10–80 (PFSCRICNQK…MGMDTTKFQY (71 aa)). 2 NR C4-type zinc fingers span residues 13–33 (CRICNQKAHGNHFGVLTCRAC) and 50–63 (CQKGGCSRNFCKRC). The 244-residue stretch at 149–392 (QLENLTEGFK…EKLQKSQFSI (244 aa)) folds into the NR LBD domain.

This sequence belongs to the nuclear hormone receptor family.

The protein resides in the nucleus. Orphan nuclear receptor. This is Nuclear hormone receptor family member nhr-125 (nhr-125) from Caenorhabditis elegans.